A 579-amino-acid polypeptide reads, in one-letter code: Nuclear receptor subfamily 1 group D member 2 (579 aa).

A required for phosphorylation by CSNK1E and cytoplasmic localization region spans residues 1-60 (MEVNAGGVIAYISSSSSASSPASCHSEGSENSFQSSSSSVPSSPNSSNSDTNGNPKNGDL). Residues 1 to 99 (MEVNAGGVIA…HSGVTKFSGM (99 aa)) form a modulating region. A compositionally biased stretch (low complexity) spans 13 to 54 (SSSSSASSPASCHSEGSENSFQSSSSSVPSSPNSSNSDTNGN). Positions 13–61 (SSSSSASSPASCHSEGSENSFQSSSSSVPSSPNSSNSDTNGNPKNGDLA) are disordered. Residue Ser46 is modified to Phosphoserine; by GSK3-beta. The nuclear receptor DNA-binding region spans 100–176 (VLLCKVCGDV…VGMSRDAVRF (77 aa)). NR C4-type zinc fingers lie at residues 103 to 123 (CKVCGDVASGFHYGVHACEGC) and 140 to 164 (CLKNENCSIMRMNRNRCQQCRFKKC). N6-acetyllysine; by KAT5 occurs at positions 162 and 163. The interval 222–250 (PAQEQLRPKPQLEQENIKSSSPPSSDFAK) is disordered. A compositionally biased stretch (basic and acidic residues) spans 227–237 (LRPKPQLEQEN). Cystine bridges form between Cys337–Cys343 and Cys374–Cys384. An NR LBD domain is found at 369–579 (KNSYLCNTGG…EELLAFKVHP (211 aa)). Residues Cys384 and His568 each coordinate heme. The interval 397-579 (SGHEIWEEFS…EELLAFKVHP (183 aa)) is interaction with ZNHIT1.

The protein belongs to the nuclear hormone receptor family. NR1 subfamily. As to quaternary structure, binds DNA as a monomer or a homodimer. Interacts with NCOA5 coactivator, leading to a strong increase of transcription of target genes. Interacts (via N-terminus) with KAT5. Interacts (via C-terminus) with HDAC1. Interacts with ZNHIT1. Interacts with SIAH2. Post-translationally, deacetylated by HDAC1. Acetylation and deacetylation regulate its transcriptional regulatory activity. Under more reducing intracellular redox conditions, Cys-384 is in its heme-bound state, which is optimal for recruitment of the NCOR1/HDAC3 corepressor complex and repression of target genes. When subjected to oxidative stress conditions, Cys-384 undergoes oxidation to form a disulfide bridge with Cys-374, also triggering a ligand switch that results in release of bound heme and derepression of target genes. In terms of processing, ubiquitinated by SIAH2; leading to proteasomal degradation. Post-translationally, phosphorylated by CSNK1E; phosphorylation enhances its cytoplasmic localization. Widely expressed. Expressed at high levels in the liver, adipose tissue, skeletal muscle and brain. Expression oscillates diurnally in the suprachiasmatic nucleus (SCN) of the hypothalamus as well as in peripheral tissues.

It localises to the nucleus. The protein resides in the cytoplasm. The heme-bound form can bind gaseous signaling molecules such as CO and nitric oxide (NO) and NO can reverse its transcriptional repressor activity. In terms of biological role, transcriptional repressor which coordinates circadian rhythm and metabolic pathways in a heme-dependent manner. Integral component of the complex transcription machinery that governs circadian rhythmicity and forms a critical negative limb of the circadian clock by directly repressing the expression of core clock components BMAL1 and CLOCK. Also regulates genes involved in metabolic functions, including lipid metabolism and the inflammatory response. Acts as a receptor for heme which stimulates its interaction with the NCOR1/HDAC3 corepressor complex, enhancing transcriptional repression. Recognizes two classes of DNA response elements within the promoter of its target genes and can bind to DNA as either monomers or homodimers, depending on the nature of the response element. Binds as a monomer to a response element composed of the consensus half-site motif 5'-[A/G]GGTCA-3' preceded by an A/T-rich 5' sequence (RevRE), or as a homodimer to a direct repeat of the core motif spaced by two nuclegotides (RevDR-2). Acts as a potent competitive repressor of ROR alpha (RORA) function and also negatively regulates the expression of NR1D1. Regulates lipid and energy homeostasis in the skeletal muscle via repression of genes involved in lipid metabolism and myogenesis including: CD36, FABP3, FABP4, UCP3, SCD1 and MSTN. Regulates hepatic lipid metabolism via the repression of APOC3. Represses gene expression at a distance in macrophages by inhibiting the transcription of enhancer-derived RNAs (eRNAs). In addition to its activity as a repressor, can also act as a transcriptional activator. Acts as a transcriptional activator of the sterol regulatory element-binding protein 1 (SREBF1) and the inflammatory mediator interleukin-6 (IL6) in the skeletal muscle. Plays a role in the regulation of circadian sleep/wake cycle; essential for maintaining wakefulness during the dark phase or active period. Key regulator of skeletal muscle mitochondrial function; negatively regulates the skeletal muscle expression of core clock genes and genes involved in mitochondrial biogenesis, fatty acid beta-oxidation and lipid metabolism. May play a role in the circadian control of neutrophilic inflammation in the lung. This is Nuclear receptor subfamily 1 group D member 2 from Homo sapiens (Human).